Here is a 673-residue protein sequence, read N- to C-terminus: UvrABC system protein B (673 aa).

The 158-residue stretch at alanine 26–arginine 183 folds into the Helicase ATP-binding domain. Residue glycine 39 to threonine 46 participates in ATP binding. The Beta-hairpin signature appears at tyrosine 92 to isoleucine 115. The Helicase C-terminal domain occupies glutamine 431–methionine 597. The interval arginine 601–proline 631 is disordered. The segment covering glutamine 618–lysine 630 has biased composition (basic and acidic residues). A UVR domain is found at alanine 635 to alanine 670.

The protein belongs to the UvrB family. In terms of assembly, forms a heterotetramer with UvrA during the search for lesions. Interacts with UvrC in an incision complex.

The protein localises to the cytoplasm. The UvrABC repair system catalyzes the recognition and processing of DNA lesions. A damage recognition complex composed of 2 UvrA and 2 UvrB subunits scans DNA for abnormalities. Upon binding of the UvrA(2)B(2) complex to a putative damaged site, the DNA wraps around one UvrB monomer. DNA wrap is dependent on ATP binding by UvrB and probably causes local melting of the DNA helix, facilitating insertion of UvrB beta-hairpin between the DNA strands. Then UvrB probes one DNA strand for the presence of a lesion. If a lesion is found the UvrA subunits dissociate and the UvrB-DNA preincision complex is formed. This complex is subsequently bound by UvrC and the second UvrB is released. If no lesion is found, the DNA wraps around the other UvrB subunit that will check the other stand for damage. The polypeptide is UvrABC system protein B (Xanthomonas oryzae pv. oryzae (strain MAFF 311018)).